Consider the following 287-residue polypeptide: 33 kDa chaperonin (287 aa).

2 disulfide bridges follow: C231/C233 and C264/C267.

This sequence belongs to the HSP33 family. Under oxidizing conditions two disulfide bonds are formed involving the reactive cysteines. Under reducing conditions zinc is bound to the reactive cysteines and the protein is inactive.

It localises to the cytoplasm. Functionally, redox regulated molecular chaperone. Protects both thermally unfolding and oxidatively damaged proteins from irreversible aggregation. Plays an important role in the bacterial defense system toward oxidative stress. In Thermosipho melanesiensis (strain DSM 12029 / CIP 104789 / BI429), this protein is 33 kDa chaperonin.